We begin with the raw amino-acid sequence, 292 residues long: ATP synthase gamma chain (292 aa).

It belongs to the ATPase gamma chain family. F-type ATPases have 2 components, CF(1) - the catalytic core - and CF(0) - the membrane proton channel. CF(1) has five subunits: alpha(3), beta(3), gamma(1), delta(1), epsilon(1). CF(0) has three main subunits: a, b and c.

The protein resides in the cell membrane. In terms of biological role, produces ATP from ADP in the presence of a proton gradient across the membrane. The gamma chain is believed to be important in regulating ATPase activity and the flow of protons through the CF(0) complex. The polypeptide is ATP synthase gamma chain (Streptococcus suis (strain 05ZYH33)).